The following is a 206-amino-acid chain: Pyridoxine/pyridoxamine 5'-phosphate oxidase (206 aa).

FMN-binding positions include 53-58, 68-69, Lys75, and Gln97; these read RMVLLK and YT. Residue Lys58 participates in substrate binding. 3 residues coordinate substrate: Tyr115, Arg119, and Ser123. Residues 132–133 and Trp177 contribute to the FMN site; that span reads QS. A substrate-binding site is contributed by 183–185; it reads RLH. Arg187 is a binding site for FMN.

Belongs to the pyridoxamine 5'-phosphate oxidase family. As to quaternary structure, homodimer. FMN is required as a cofactor.

The enzyme catalyses pyridoxamine 5'-phosphate + O2 + H2O = pyridoxal 5'-phosphate + H2O2 + NH4(+). It catalyses the reaction pyridoxine 5'-phosphate + O2 = pyridoxal 5'-phosphate + H2O2. Its pathway is cofactor metabolism; pyridoxal 5'-phosphate salvage; pyridoxal 5'-phosphate from pyridoxamine 5'-phosphate: step 1/1. It participates in cofactor metabolism; pyridoxal 5'-phosphate salvage; pyridoxal 5'-phosphate from pyridoxine 5'-phosphate: step 1/1. Catalyzes the oxidation of either pyridoxine 5'-phosphate (PNP) or pyridoxamine 5'-phosphate (PMP) into pyridoxal 5'-phosphate (PLP). The sequence is that of Pyridoxine/pyridoxamine 5'-phosphate oxidase from Rhizobium etli (strain CIAT 652).